The sequence spans 114 residues: Large ribosomal subunit protein P2 (114 aa).

Over residues 74-83 (AAAAGGGGGD) the composition is skewed to gly residues. Positions 74–114 (AAAAGGGGGDAPAAAAEEPKKEEKSEEESDEELGFSLFDDN) are disordered. The segment covering 98 to 114 (SEEESDEELGFSLFDDN) has biased composition (acidic residues).

It belongs to the eukaryotic ribosomal protein P1/P2 family. As to quaternary structure, P1 and P2 exist as dimers at the large ribosomal subunit. Post-translationally, phosphorylated.

In terms of biological role, plays an important role in the elongation step of protein synthesis. In Parthenium argentatum (Guayule rubber plant), this protein is Large ribosomal subunit protein P2.